Here is a 238-residue protein sequence, read N- to C-terminus: Octanoyltransferase (238 aa).

A BPL/LPL catalytic domain is found at 40–220 (AGGSDALLLL…RVCDALDGRL (181 aa)). Substrate is bound by residues 78–85 (RGGKITWH), 150–152 (AIG), and 163–165 (GFA). Cysteine 181 (acyl-thioester intermediate) is an active-site residue.

Belongs to the LipB family.

Its subcellular location is the cytoplasm. The catalysed reaction is octanoyl-[ACP] + L-lysyl-[protein] = N(6)-octanoyl-L-lysyl-[protein] + holo-[ACP] + H(+). It participates in protein modification; protein lipoylation via endogenous pathway; protein N(6)-(lipoyl)lysine from octanoyl-[acyl-carrier-protein]: step 1/2. Catalyzes the transfer of endogenously produced octanoic acid from octanoyl-acyl-carrier-protein onto the lipoyl domains of lipoate-dependent enzymes. Lipoyl-ACP can also act as a substrate although octanoyl-ACP is likely to be the physiological substrate. The sequence is that of Octanoyltransferase from Mycobacterium sp. (strain JLS).